Here is a 962-residue protein sequence, read N- to C-terminus: Vacuolar membrane protease (962 aa).

Residues 1–14 lie on the Cytoplasmic side of the membrane; it reads MLAQFLRSLFRFRK. The chain crosses the membrane as a helical span at residues 15–35; it reads TTVSVLLVATYVVVFLLNVWD. Residues 36–359 are Vacuolar-facing; the sequence is RIRYQYSLPE…FVTASTKDLF (324 aa). A glycan (N-linked (GlcNAc...) asparagine) is linked at asparagine 118. 2 residues coordinate Zn(2+): histidine 153 and aspartate 165. The active-site Proton acceptor is glutamate 197. Positions 198, 223, and 297 each coordinate Zn(2+). Residues 360–380 form a helical membrane-spanning segment; sequence TLNCVVLSVIPVIILVLEFVI. At 381-390 the chain is on the cytoplasmic side; it reads QRRKTRERNP. The helical transmembrane segment at 391–411 threads the bilayer; the sequence is LLVWLRLPFSMFISYLVTATF. Residues 412-431 are Vacuolar-facing; sequence RSSLFRVNPLIFSRDYVSPT. The helical transmembrane segment at 432 to 452 threads the bilayer; sequence IGFSFTFLILNYLVLSLLEYL. Residues 453–460 lie on the Cytoplasmic side of the membrane; that stretch reads APSRDLKT. Residues 461–481 form a helical membrane-spanning segment; the sequence is VSFVELFFGMWIALLWATIRL. Residues 482–489 are Vacuolar-facing; the sequence is CTSKYTAT. The chain crosses the membrane as a helical span at residues 490–510; sequence GVYPITVLYLLMSFGAIVGLV. At 511–601 the chain is on the cytoplasmic side; sequence CSAFKRKHSV…VVSALNYDWS (91 aa). Over residues 531–554 the composition is skewed to polar residues; the sequence is APNTYSSIEESPQQATNTEAPNEN. The segment at 531–563 is disordered; that stretch reads APNTYSSIEESPQQATNTEAPNENSPEEHDERA. A helical membrane pass occupies residues 602–622; sequence VQFLAVVPLASFFVIMCLSLI. The Vacuolar segment spans residues 623 to 639; the sequence is LDGIYQTCQEGFQATWN. A glycan (N-linked (GlcNAc...) asparagine) is linked at asparagine 639. Residues 640-660 form a helical membrane-spanning segment; sequence VSKISMLGGMLLAIPVLPFCY. A topological domain (cytoplasmic) is located at residue lysine 661. A helical transmembrane segment spans residues 662–682; sequence LNYFVSMVLLFAAASAGIFSF. Over 683-962 the chain is Vacuolar; sequence ERAPFTESSP…LVIVNDYIEL (280 aa). Residues asparagine 812 and asparagine 839 are each glycosylated (N-linked (GlcNAc...) asparagine).

This sequence belongs to the peptidase M28 family. Zn(2+) is required as a cofactor.

It is found in the vacuole membrane. May be involved in vacuolar sorting and osmoregulation. The chain is Vacuolar membrane protease from Lachancea thermotolerans (strain ATCC 56472 / CBS 6340 / NRRL Y-8284) (Yeast).